Reading from the N-terminus, the 215-residue chain is Cytochrome b6 (215 aa).

The helical transmembrane segment at 32–52 (IFYCLGGITLTCFLVQVATGF) threads the bilayer. C35 contacts heme c. Heme b is bound by residues H86 and H100. Transmembrane regions (helical) follow at residues 90–110 (ASMM…TGGF), 116–136 (LTWV…VTGY), and 186–206 (LHTF…FPMI). Heme b is bound by residues H187 and H202.

The protein belongs to the cytochrome b family. PetB subfamily. The 4 large subunits of the cytochrome b6-f complex are cytochrome b6, subunit IV (17 kDa polypeptide, PetD), cytochrome f and the Rieske protein, while the 4 small subunits are PetG, PetL, PetM and PetN. The complex functions as a dimer. Requires heme b as cofactor. Heme c serves as cofactor.

It is found in the plastid. The protein resides in the chloroplast thylakoid membrane. Component of the cytochrome b6-f complex, which mediates electron transfer between photosystem II (PSII) and photosystem I (PSI), cyclic electron flow around PSI, and state transitions. This chain is Cytochrome b6, found in Solanum bulbocastanum (Wild potato).